The following is a 515-amino-acid chain: Fc receptor-like protein 4 (515 aa).

The first 19 residues, 1-19 (MLLWASLLAFAPVCGQSAA), serve as a signal peptide directing secretion. Residues 20 to 387 (AHKPVISVHP…RETPGNRDGL (368 aa)) are Extracellular-facing. Ig-like C2-type domains are found at residues 23–97 (PVIS…NPVR), 102–183 (SDSL…NFKI), 193–271 (PELK…GNIH), and 275–374 (PSLQ…MVLN). Cystine bridges form between cysteine 44–cysteine 85, cysteine 123–cysteine 167, cysteine 212–cysteine 261, and cysteine 310–cysteine 359. A glycan (N-linked (GlcNAc...) asparagine) is linked at asparagine 374. A helical transmembrane segment spans residues 388 to 408 (VAAGATGGLLSALLLAVALLF). Residues 409 to 515 (HCWRRRKSGV…GKISSKDEES (107 aa)) lie on the Cytoplasmic side of the membrane. Short sequence motifs (ITIM motif) lie at residues 449–454 (SLYVDV), 461–466 (LVYSEI), and 491–496 (VVYSEV). Residues 494–515 (SEVKTQHPDNSAGKISSKDEES) are disordered.

As to quaternary structure, interacts with PTPN6 and PTPN11. Post-translationally, phosphorylated on cytoplasmic tyrosines upon activation. Specifically expressed by memory and monocytoid B-cells which populate spleen and lymph nodes. Preferentially expressed in memory B-cells associated with mucosal tissue (at protein level).

Its subcellular location is the cell membrane. May function as an inhibitor of the B-cell receptor signaling. May function in the B-cell-mediated immune response. The sequence is that of Fc receptor-like protein 4 (FCRL4) from Homo sapiens (Human).